A 720-amino-acid polypeptide reads, in one-letter code: Collectin-12 (720 aa).

Residues 1-37 lie on the Cytoplasmic side of the membrane; that stretch reads MKDDFNDEEEVQSFGYKRFGIQEGNECTKCKNDWALR. The chain crosses the membrane as a helical; Signal-anchor for type II membrane protein span at residues 38 to 58; it reads VAIALLYVLCALLTIAVAVLG. At 59-720 the chain is on the extracellular side; sequence YKVVQRMDNV…RTNESKVPVL (662 aa). Coiled-coil stretches lie at residues 95 to 120, 216 to 267, and 377 to 408; these read EKSE…QLSD, ISSL…LAAN, and LHGL…LDKE. Residues 433-576 are disordered; the sequence is FTILQGPPGP…GPPGLPGLPA (144 aa). Collagen-like domains follow at residues 444 to 503 and 510 to 569; these read GPRG…PGPK and GRQG…PGPP. Over residues 460 to 479 the composition is skewed to basic and acidic residues; it reads PKGEKGEKGAPGDAGPKGEK. The span at 488-503 shows a compositional bias: low complexity; it reads PGLKGPPGSRGSPGPK. The segment covering 504–513 has biased composition (gly residues); that stretch reads GSRGSGGRQG. Residues 527–560 are compositionally biased toward low complexity; the sequence is PGRDGQPGPTGPQGPQGLRGPAGPAGLEGARGPV. The span at 562–576 shows a compositional bias: pro residues; that stretch reads PIGPPGPPGLPGLPA. Intrachain disulfides connect cysteine 604–cysteine 615, cysteine 634–cysteine 709, and cysteine 687–cysteine 701. The C-type lectin domain maps to 611 to 710; that stretch reads FREQCYHFSA…CTERIGFICE (100 aa). Ca(2+) is bound by residues isoleucine 643, asparagine 645, and glutamate 649. 3 residues coordinate a carbohydrate: lysine 670, glutamine 673, and aspartate 675. Ca(2+)-binding residues include glutamine 673, aspartate 675, asparagine 676, glutamate 685, aspartate 686, asparagine 697, aspartate 698, and glutamate 710. Glutamate 685 contributes to the a carbohydrate binding site. Asparagine 697 and aspartate 698 together coordinate a carbohydrate.

The protein resides in the membrane. Functionally, scavenger receptor that displays several functions associated with host defense. Binds to carbohydrates. This Danio rerio (Zebrafish) protein is Collectin-12 (colec12).